Reading from the N-terminus, the 532-residue chain is Probable inorganic phosphate transporter 1-9 (532 aa).

Residues 1–22 (MPELSLLSALDAARIQWYHFKA) lie on the Cytoplasmic side of the membrane. The chain crosses the membrane as a helical span at residues 23 to 43 (IIVAGMGLFTDAYDLFCIAPI). The Extracellular portion of the chain corresponds to 44–62 (MKMISQIYYHKDSIGTALL). The chain crosses the membrane as a helical span at residues 63-83 (STSYAIALLGTALGQLIFGYL). Residues 84 to 91 (GDRVGRRK) are Cytoplasmic-facing. A helical membrane pass occupies residues 92 to 112 (VYGLSLLIMVFSSFGCGFSVC). Over 113 to 124 (TTRRSCVMVSLG) the chain is Extracellular. Residues 125-145 (FFRFVLGLGIGGDYPLSATIM) form a helical membrane-spanning segment. The Cytoplasmic segment spans residues 146-154 (SEFANKRTR). A helical membrane pass occupies residues 155 to 175 (GAFIAAVFSMQGLGILMSSAV). Residues 176-207 (TMVVCLAFKNAGEGSSEKTNVAGLETLAPPES) lie on the Extracellular side of the membrane. Residues 208 to 228 (DIAWRLILMIGALPAALTFYW) form a helical membrane-spanning segment. Over 229 to 292 (RMLMPETARY…KLFSRRFLSL (64 aa)) the chain is Cytoplasmic. The chain crosses the membrane as a helical span at residues 293 to 313 (HGRDLFAASANWFLVDVVFYT). Residues 314–343 (SNLLLSQIFNFSNKPLNSTNVYDSAFEVAK) are Extracellular-facing. The chain crosses the membrane as a helical span at residues 344 to 364 (LAAIVAACSTIPGYWFTVYFI). The Cytoplasmic portion of the chain corresponds to 365 to 371 (DKIGRVK). Residues 372–392 (IQMMGFFLMAVVYLVAGIPYS) traverse the membrane as a helical segment. Topologically, residues 393 to 406 (WYWSKHEKTNKGFM) are extracellular. Residues 407-427 (VLYGLIFFFSNFGPNTTTFII) form a helical membrane-spanning segment. The Cytoplasmic portion of the chain corresponds to 428 to 441 (PAELFPARFRSTCH). A helical transmembrane segment spans residues 442–462 (GISGAAGKFGAIVGTVGFLWA). At 463–478 (TRHHEEDGFPDVKRVR) the chain is on the extracellular side. Residues 479–499 (IAFLILGGVCIAGMIVTYLFT) traverse the membrane as a helical segment. The Cytoplasmic segment spans residues 500 to 532 (RETMGRSLEENEDEIVSTSAGSSPANELLRRQY). Positions 509 to 532 (ENEDEIVSTSAGSSPANELLRRQY) are disordered. A compositionally biased stretch (polar residues) spans 515–524 (VSTSAGSSPA).

Belongs to the major facilitator superfamily. Phosphate:H(+) symporter (TC 2.A.1.9) family.

Its subcellular location is the membrane. Its function is as follows. High-affinity transporter for external inorganic phosphate. In Arabidopsis thaliana (Mouse-ear cress), this protein is Probable inorganic phosphate transporter 1-9 (PHT1-9).